Here is a 973-residue protein sequence, read N- to C-terminus: Serine/threonine-protein kinase atg1 (973 aa).

Residues 23–328 (YTRLDEIGRG…FPDFFQNGVI (306 aa)) form the Protein kinase domain. ATP is bound by residues 29 to 37 (IGRGSFATV) and Lys52. Asp166 serves as the catalytic Proton acceptor. Disordered regions lie at residues 338 to 446 (DDLP…PGRQ), 460 to 482 (RQKGRNTFSEGSPQIDRQADKLR), 523 to 587 (GNIS…QSPT), and 949 to 973 (PTPSANVPSKMASSNPVSVGATPPK). Polar residues predominate over residues 387–407 (GLTQRPPSQNQRFGTPQTTTP). The span at 523-537 (GNISRGAQTGALSRR) shows a compositional bias: polar residues. Basic and acidic residues predominate over residues 566–582 (SRADSMHNRQGSYERRY). The segment covering 951–965 (PSANVPSKMASSNPV) has biased composition (polar residues).

Belongs to the protein kinase superfamily. Ser/Thr protein kinase family. APG1/unc-51/ULK1 subfamily. As to quaternary structure, homodimer. Forms a ternary complex with ATG13 and ATG17.

It is found in the cytoplasm. It localises to the preautophagosomal structure membrane. The catalysed reaction is L-seryl-[protein] + ATP = O-phospho-L-seryl-[protein] + ADP + H(+). The enzyme catalyses L-threonyl-[protein] + ATP = O-phospho-L-threonyl-[protein] + ADP + H(+). In terms of biological role, serine/threonine protein kinase involved in the cytoplasm to vacuole transport (Cvt) and found to be essential in autophagy, where it is required for the formation of autophagosomes. Involved in the clearance of protein aggregates which cannot be efficiently cleared by the proteasome. Required for selective autophagic degradation of the nucleus (nucleophagy) as well as for mitophagy which contributes to regulate mitochondrial quantity and quality by eliminating the mitochondria to a basal level to fulfill cellular energy requirements and preventing excess ROS production. Also involved in endoplasmic reticulum-specific autophagic process, in selective removal of ER-associated degradation (ERAD) substrates. Plays a key role in ATG9 and ATG23 cycling through the pre-autophagosomal structure and is necessary to promote ATG18 binding to ATG9 through phosphorylation of ATG9. Catalyzes phosphorylation of ATG4, decreasing the interaction between ATG4 and ATG8 and impairing deconjugation of PE-conjugated forms of ATG8. This Aspergillus fumigatus (strain ATCC MYA-4609 / CBS 101355 / FGSC A1100 / Af293) (Neosartorya fumigata) protein is Serine/threonine-protein kinase atg1.